A 90-amino-acid polypeptide reads, in one-letter code: Small ribosomal subunit protein bS16 (90 aa).

The protein belongs to the bacterial ribosomal protein bS16 family.

This Streptococcus pyogenes serotype M4 (strain MGAS10750) protein is Small ribosomal subunit protein bS16.